Consider the following 438-residue polypeptide: Serine/threonine-protein kinase VIK (438 aa).

Residues 1–31 are disordered; it reads MSSDSPAAGDGGEQAAAGTSVPSPSYDKQKE. 3 ANK repeats span residues 36–65, 70–99, and 103–133; these read SRTSLILWHAHQNDAAAVRKLLEEDPTLVH, DKRTPLHVASLHGWIDVVKCLLEFGADVNA, and WKNTPLADAEGARKQKMIELLKSHGGLSYGQ. A Protein kinase domain is found at 162-427; that stretch reads FSNAAMIGKG…KRLEKIKETL (266 aa). ATP is bound by residues 168-176 and K189; that span reads IGKGSFGEI. Catalysis depends on D285, which acts as the Proton acceptor.

It belongs to the protein kinase superfamily. Ser/Thr protein kinase family. In terms of assembly, interacts with BRL2. Binds to MSSP1/TMT1 at the tonoplast. In terms of processing, phosphorylated. In terms of tissue distribution, restricted to mature vascular cells. Mostly expressed in mature leaves and seeds, and, to a lower level, in seedlings, young leaves, flowers and siliques.

It is found in the vacuole. The enzyme catalyses L-seryl-[protein] + ATP = O-phospho-L-seryl-[protein] + ADP + H(+). It carries out the reaction L-threonyl-[protein] + ATP = O-phospho-L-threonyl-[protein] + ADP + H(+). Serine/threonine protein kinase which may function as an adapter protein for BRL2. Required during vascular development for the establishment of vein pattern in foliar organs. Mediates MSSP1/TMT1 phosphorylation and activation to enhance its carrier activity and consequently vacuolar sugar accumulation, particularly in response to cold. In Arabidopsis thaliana (Mouse-ear cress), this protein is Serine/threonine-protein kinase VIK.